A 201-amino-acid chain; its full sequence is Peptide deformylase (201 aa).

The segment at 1 to 21 (MANHFSQLAKKSRTNGNAEKI) is disordered. 2 residues coordinate Fe cation: Cys-121 and His-163. Glu-164 is a catalytic residue. His-167 contributes to the Fe cation binding site.

The protein belongs to the polypeptide deformylase family. Fe(2+) serves as cofactor.

The enzyme catalyses N-terminal N-formyl-L-methionyl-[peptide] + H2O = N-terminal L-methionyl-[peptide] + formate. In terms of biological role, removes the formyl group from the N-terminal Met of newly synthesized proteins. Requires at least a dipeptide for an efficient rate of reaction. N-terminal L-methionine is a prerequisite for activity but the enzyme has broad specificity at other positions. This chain is Peptide deformylase, found in Prochlorococcus marinus (strain AS9601).